The following is a 460-amino-acid chain: MTEISSMVISHKKAKIEEMESAWHGDLDGLLNNLYHHEYVYECVVLKTCNRVEIYVVSPKSSSVLFSFAKEMGASTHIIDFYGHDESLEHLLRLAGGLESMIVGEDQILGQIKDLYAYSKKAGTTGKILDTAFEKAIQVGKRIRNETRINKGSVSIGSAAVDLAEDIFGGLTGKSVLVIGAGEIGVLVAKALAEKDIEAIYIANRTFKKAEEIAYELGGYAVRLDDIRGHLPDADVVISGTGAPHYILTREMIEEALDGRERKLLLIDIANPRDIEESVAELENVELCNIDNLRVISERTLKMRKEEAKKAEAIIQEEIRLLNIQYKRQKADRLISELYRQVYDVRVREREKAVNRLSAYHTIGEIETEVLDDLTHSIVNKILAEPTKVLRQAAELGNEEFLDVVSRVFCLEKDKAKLEKINQAKFEQIEPGCAKEQAAVKEQTAVKEQAVVKEQAAVKD.

Substrate is bound by residues 48–51, serine 100, 105–107, and glutamine 111; these read TCNR and EDQ. The Nucleophile role is filled by cysteine 49. 180–185 lines the NADP(+) pocket; sequence GAGEIG.

It belongs to the glutamyl-tRNA reductase family. In terms of assembly, homodimer.

It catalyses the reaction (S)-4-amino-5-oxopentanoate + tRNA(Glu) + NADP(+) = L-glutamyl-tRNA(Glu) + NADPH + H(+). Its pathway is porphyrin-containing compound metabolism; protoporphyrin-IX biosynthesis; 5-aminolevulinate from L-glutamyl-tRNA(Glu): step 1/2. Its function is as follows. Catalyzes the NADPH-dependent reduction of glutamyl-tRNA(Glu) to glutamate 1-semialdehyde (GSA). The protein is Glutamyl-tRNA reductase of Methanosarcina acetivorans (strain ATCC 35395 / DSM 2834 / JCM 12185 / C2A).